Here is a 563-residue protein sequence, read N- to C-terminus: Sperm-tail PG-rich repeat-containing protein 2 (563 aa).

3 STPGR repeats span residues 21-34 (VGPG…PKQQ), 63-73 (PGPAHYNVSQA), and 97-107 (GPGPASYDCPY). Residues 131–163 (IPSIPSSGKSHGYHLNEDDTIMRRTPPSSDKTM) form a disordered region. STPGR repeat units follow at residues 200–219 (GPGP…YENI), 250–263 (PGPG…QFDH), 292–321 (TPAP…FGQR), 334–353 (LPGP…QVKK), 423–438 (LPAP…YDMS), 473–483 (GPGPATYNPIL), and 507–518 (SPGPTTYELSPF).

The polypeptide is Sperm-tail PG-rich repeat-containing protein 2 (Stpg2) (Rattus norvegicus (Rat)).